The chain runs to 429 residues: tRNA-2-methylthio-N(6)-dimethylallyladenosine synthase (429 aa).

The 110-residue stretch at 1–110 (MKFFIKTYGC…IPEAVELSIK (110 aa)) folds into the MTTase N-terminal domain. C10, C46, C75, C146, C150, and C153 together coordinate [4Fe-4S] cluster. Residues 132 to 364 (RNSKHHAWIT…NLQKEINKML (233 aa)) form the Radical SAM core domain. The TRAM domain maps to 366–427 (ESYLDKTVEV…AGPLYGDIIK (62 aa)).

This sequence belongs to the methylthiotransferase family. MiaB subfamily. Monomer. [4Fe-4S] cluster is required as a cofactor.

It is found in the cytoplasm. The catalysed reaction is N(6)-dimethylallyladenosine(37) in tRNA + (sulfur carrier)-SH + AH2 + 2 S-adenosyl-L-methionine = 2-methylsulfanyl-N(6)-dimethylallyladenosine(37) in tRNA + (sulfur carrier)-H + 5'-deoxyadenosine + L-methionine + A + S-adenosyl-L-homocysteine + 2 H(+). Its function is as follows. Catalyzes the methylthiolation of N6-(dimethylallyl)adenosine (i(6)A), leading to the formation of 2-methylthio-N6-(dimethylallyl)adenosine (ms(2)i(6)A) at position 37 in tRNAs that read codons beginning with uridine. This is tRNA-2-methylthio-N(6)-dimethylallyladenosine synthase from Thermosipho africanus (strain TCF52B).